The primary structure comprises 543 residues: Early growth response protein 1 (543 aa).

Disordered regions lie at residues 1-105, 165-213, and 264-284; these read MAAA…AESF, TNPP…PTPN, and LGLGTPDQKPFQGLESRTQQP. Residues 57–66 are compositionally biased toward low complexity; it reads GSGSNSSSSS. Residues 67 to 77 show a composition bias toward gly residues; the sequence is SGGGGGGGGGS. Residues 167–189 are compositionally biased toward low complexity; that stretch reads PPASSSSAPSPAASSASASQSPP. Residue K305 forms a Glycyl lysine isopeptide (Lys-Gly) (interchain with G-Cter in SUMO2) linkage. A disordered region spans residues 318-339; it reads PSRMRKYPNRPSKTPPHERPYA. 3 C2H2-type zinc fingers span residues 338-362, 368-390, and 396-418; these read YACPVESCDRRFSRSDELTRHIRIH, FQCRICMRNFSRSDHLTTHIRTH, and FACDICGRKFARSDERKRHTKIH. Positions 409–487 are disordered; the sequence is DERKRHTKIH…GSSTYPSPVH (79 aa). The segment covering 413-423 has biased composition (basic residues); sequence RHTKIHLRQKD. A compositionally biased stretch (low complexity) spans 429–486; that stretch reads SVVASSATSSLSSYPSPVATSYPSPVTTSYPSPATTSYPSPVPTSFSSPGSSTYPSPV.

The protein belongs to the EGR C2H2-type zinc-finger protein family. Interacts with SNAI1 and SP1 upon 12-O-tetradecanoylphorbol-13-acetate (TPA) induction. As to expression, detected in neutrophils (at protein level).

The protein resides in the nucleus. It localises to the cytoplasm. Transcriptional regulator. Recognizes and binds to the DNA sequence 5'-GCG(T/G)GGGCG-3'(EGR-site) in the promoter region of target genes. Binds double-stranded target DNA, irrespective of the cytosine methylation status. Regulates the transcription of numerous target genes, and thereby plays an important role in regulating the response to growth factors, DNA damage, and ischemia. Plays a role in the regulation of cell survival, proliferation and cell death. Activates expression of p53/TP53 and TGFB1, and thereby helps prevent tumor formation. Required for normal progress through mitosis and normal proliferation of hepatocytes after partial hepatectomy. Mediates responses to ischemia and hypoxia; regulates the expression of proteins such as IL1B and CXCL2 that are involved in inflammatory processes and development of tissue damage after ischemia. Regulates biosynthesis of luteinizing hormone (LHB) in the pituitary. Regulates the amplitude of the expression rhythms of clock genes: BMAL1, PER2 and NR1D1 in the liver via the activation of PER1 (clock repressor) transcription. Regulates the rhythmic expression of core-clock gene BMAL1 in the suprachiasmatic nucleus (SCN). The polypeptide is Early growth response protein 1 (EGR1) (Homo sapiens (Human)).